The primary structure comprises 184 residues: MGIEEKLPSGVLLSTVEGLAGYMRKASFWPASFGLACCAIEMMTSGGPKHDLGRFGMEVFRASPRQADVMIVAGRVSQKMAPVLRQIYDQMPEPKWVLAMGVCASSGGMFNNYAVVQGVDHVVPVDMYLPGCPPRPQMLIDAILKLHDKVQHTKMGAHRAAEIEELETAALRALPTSEMKGQLR.

Positions 37, 38, 103, and 132 each coordinate [4Fe-4S] cluster.

Belongs to the complex I 20 kDa subunit family. In terms of assembly, NDH-1 is composed of 14 different subunits. Subunits NuoB, C, D, E, F, and G constitute the peripheral sector of the complex. It depends on [4Fe-4S] cluster as a cofactor.

The protein resides in the cell membrane. It carries out the reaction a quinone + NADH + 5 H(+)(in) = a quinol + NAD(+) + 4 H(+)(out). Functionally, NDH-1 shuttles electrons from NADH, via FMN and iron-sulfur (Fe-S) centers, to quinones in the respiratory chain. The immediate electron acceptor for the enzyme in this species is believed to be a menaquinone. Couples the redox reaction to proton translocation (for every two electrons transferred, four hydrogen ions are translocated across the cytoplasmic membrane), and thus conserves the redox energy in a proton gradient. This Nocardioides sp. (strain ATCC BAA-499 / JS614) protein is NADH-quinone oxidoreductase subunit B.